The primary structure comprises 82 residues: ATP synthase subunit c, chloroplastic (82 aa).

The next 2 helical transmembrane spans lie at 3 to 23 (PLIA…ASIG) and 57 to 77 (LAFM…LLFA).

The protein belongs to the ATPase C chain family. As to quaternary structure, F-type ATPases have 2 components, F(1) - the catalytic core - and F(0) - the membrane proton channel. F(1) has five subunits: alpha(3), beta(3), gamma(1), delta(1), epsilon(1). F(0) has four main subunits: a(1), b(1), b'(1) and c(10-14). The alpha and beta chains form an alternating ring which encloses part of the gamma chain. F(1) is attached to F(0) by a central stalk formed by the gamma and epsilon chains, while a peripheral stalk is formed by the delta, b and b' chains.

The protein localises to the plastid. Its subcellular location is the chloroplast thylakoid membrane. Its function is as follows. F(1)F(0) ATP synthase produces ATP from ADP in the presence of a proton or sodium gradient. F-type ATPases consist of two structural domains, F(1) containing the extramembraneous catalytic core and F(0) containing the membrane proton channel, linked together by a central stalk and a peripheral stalk. During catalysis, ATP synthesis in the catalytic domain of F(1) is coupled via a rotary mechanism of the central stalk subunits to proton translocation. Key component of the F(0) channel; it plays a direct role in translocation across the membrane. A homomeric c-ring of between 10-14 subunits forms the central stalk rotor element with the F(1) delta and epsilon subunits. The polypeptide is ATP synthase subunit c, chloroplastic (Nephroselmis olivacea (Green alga)).